Here is a 390-residue protein sequence, read N- to C-terminus: Na(+)/H(+) antiporter NhaA 1 (390 aa).

The next 11 helical transmembrane spans lie at 14 to 34 (SGIL…NGVL), 59 to 79 (TILW…GLEL), 94 to 114 (VALP…IFYV), 125 to 145 (GWAI…FLLG), 154 to 174 (LFLL…IAIF), 179 to 199 (LSII…ILNY), 205 to 225 (IYIY…SGIH), 260 to 280 (PIVA…VVFS), 295 to 315 (IIFG…FLAI), 328 to 348 (WLHL…SLFI), and 362 to 382 (ANKI…YFVL).

The protein belongs to the NhaA Na(+)/H(+) (TC 2.A.33) antiporter family.

The protein resides in the cell inner membrane. It catalyses the reaction Na(+)(in) + 2 H(+)(out) = Na(+)(out) + 2 H(+)(in). Na(+)/H(+) antiporter that extrudes sodium in exchange for external protons. The chain is Na(+)/H(+) antiporter NhaA 1 from Campylobacter fetus subsp. fetus (strain 82-40).